We begin with the raw amino-acid sequence, 219 residues long: MIDLKTKAFDIAQNFTISLDGPAASGKGTVGLILAKKFSLKYFQSSIVYRQLAFNCINQQIDITDIDAVIALSKELKLDNNIDLENEDIGDIASQIAVISDVRNNLNENLINLVKTTPRIIMEGRDIGTVVAPDADLKIFITASPYVRAIRRYNQLQAKGKTCILDEIIQQIILRDKRDKERKAGPLLPALGAFIIDTSKLSAIEIVEEVTNYIKNKIT.

21–29 (GPAASGKGT) contributes to the ATP binding site.

This sequence belongs to the cytidylate kinase family. Type 1 subfamily.

It is found in the cytoplasm. The enzyme catalyses CMP + ATP = CDP + ADP. The catalysed reaction is dCMP + ATP = dCDP + ADP. This is Cytidylate kinase from Rickettsia prowazekii (strain Madrid E).